A 277-amino-acid chain; its full sequence is Caspase-3 (277 aa).

N-acetylmethionine is present on methionine 1. Propeptides lie at residues 1–9 (MENTENSVD) and 10–28 (SKSI…KSVD). Lysine 11 bears the N6-acetyllysine mark. The residue at position 26 (serine 26) is a Phosphoserine. Catalysis depends on residues histidine 121 and cysteine 163. Cysteine 163 is modified (S-nitrosocysteine; in inhibited form).

The protein belongs to the peptidase C14A family. In terms of assembly, heterotetramer that consists of two anti-parallel arranged heterodimers, each one formed by a 17 kDa (p17) and a 12 kDa (p12) subunit. Interacts with BIRC6/bruce. Post-translationally, cleavage by granzyme B, caspase-6, caspase-8 and caspase-10 generates the two active subunits. Additional processing of the propeptides is likely due to the autocatalytic activity of the activated protease. Active heterodimers between the small subunit of caspase-7 protease and the large subunit of caspase-3 also occur and vice versa. In terms of processing, S-nitrosylated on its catalytic site cysteine in unstimulated cell lines and denitrosylated upon activation of the Fas apoptotic pathway, associated with an increase in intracellular caspase activity. Fas therefore activates caspase-3 not only by inducing the cleavage of the caspase zymogen to its active subunits, but also by stimulating the denitrosylation of its active site thiol. Ubiquitinated by BIRC6; this activity is inhibited by DIABLO/SMAC.

It localises to the cytoplasm. It carries out the reaction Strict requirement for an Asp residue at positions P1 and P4. It has a preferred cleavage sequence of Asp-Xaa-Xaa-Asp-|- with a hydrophobic amino-acid residue at P2 and a hydrophilic amino-acid residue at P3, although Val or Ala are also accepted at this position.. With respect to regulation, inhibited by BIRC6; following inhibition of BIRC6-caspase binding by DIABLO/SMAC, BIRC6 is subjected to caspase cleavage, leading to an increase in active caspases. Functionally, involved in the activation cascade of caspases responsible for apoptosis execution. At the onset of apoptosis, it proteolytically cleaves poly(ADP-ribose) polymerase PARP1 at a '216-Asp-|-Gly-217' bond. Cleaves and activates sterol regulatory element binding proteins (SREBPs) between the basic helix-loop-helix leucine zipper domain and the membrane attachment domain. Cleaves and activates caspase-6, -7 and -9 (CASP6, CASP7 and CASP9, respectively). Cleaves and inactivates interleukin-18 (IL18). Triggers cell adhesion in sympathetic neurons through RET cleavage. Cleaves IL-1 beta between an Asp and an Ala, releasing the mature cytokine which is involved in a variety of inflammatory processes. Cleaves and inhibits serine/threonine-protein kinase AKT1 in response to oxidative stress. Acts as an inhibitor of type I interferon production during virus-induced apoptosis by mediating cleavage of antiviral proteins CGAS, IRF3 and MAVS, thereby preventing cytokine overproduction. Also involved in pyroptosis by mediating cleavage and activation of gasdermin-E (GSDME). Cleaves XRCC4 and phospholipid scramblase proteins XKR4, XKR8 and XKR9, leading to promote phosphatidylserine exposure on apoptotic cell surface. Cleaves BIRC6 following inhibition of BIRC6-caspase binding by DIABLO/SMAC. In Macaca fascicularis (Crab-eating macaque), this protein is Caspase-3 (CASP3).